Consider the following 260-residue polypeptide: BTB/POZ domain-containing protein KCTD21 (260 aa).

The BTB domain occupies 3–72 (DPITLNVGGK…LRTSHLDLPE (70 aa)). Positions 88-112 (QVQPLIEALQEKEVELSKAEKNAML) form a coiled coil.

Homopentamer. Interacts with KCTD11; KCTD21 and KCTD11 may associate in pentameric assemblies. Interacts (via BTB domain) with CUL3; indicative for a participation in a BCR (BTB-CUL3-RBX1) E3 ubiquitin-protein ligase complex. As to expression, highly expressed in cerebellum and brain. Expressed in adult cerebellum (at protein level).

It participates in protein modification; protein ubiquitination. Its function is as follows. Probable substrate-specific adapter of a BCR (BTB-CUL3-RBX1) E3 ubiquitin-protein ligase complex mediating the ubiquitination and subsequent proteasomal degradation of target proteins. Promotes the ubiquitination of HDAC1. Can function as antagonist of the Hedgehog pathway by affecting the nuclear transfer of transcription factor GLI1; the function probably occurs via HDAC1 down-regulation, keeping GLI1 acetylated and inactive. Inhibits cell growth and tumorigenicity of medulloblastoma (MDB). The polypeptide is BTB/POZ domain-containing protein KCTD21 (Kctd21) (Mus musculus (Mouse)).